The sequence spans 350 residues: tRNA N6-adenosine threonylcarbamoyltransferase (350 aa).

Residues His-115 and His-119 each contribute to the Fe cation site. Substrate contacts are provided by residues 137-141 (IISGG), Asp-170, Gly-183, and Asn-281. A Fe cation-binding site is contributed by Asp-309.

Belongs to the KAE1 / TsaD family. Fe(2+) serves as cofactor.

It is found in the cytoplasm. The enzyme catalyses L-threonylcarbamoyladenylate + adenosine(37) in tRNA = N(6)-L-threonylcarbamoyladenosine(37) in tRNA + AMP + H(+). Its function is as follows. Required for the formation of a threonylcarbamoyl group on adenosine at position 37 (t(6)A37) in tRNAs that read codons beginning with adenine. Is involved in the transfer of the threonylcarbamoyl moiety of threonylcarbamoyl-AMP (TC-AMP) to the N6 group of A37, together with TsaE and TsaB. TsaD likely plays a direct catalytic role in this reaction. The protein is tRNA N6-adenosine threonylcarbamoyltransferase of Ehrlichia canis (strain Jake).